Consider the following 616-residue polypeptide: Dihydroxy-acid dehydratase (616 aa).

D81 lines the Mg(2+) pocket. C122 is a binding site for [2Fe-2S] cluster. The Mg(2+) site is built by D123 and K124. K124 is modified (N6-carboxylysine). C195 contributes to the [2Fe-2S] cluster binding site. E491 serves as a coordination point for Mg(2+). Residue S517 is the Proton acceptor of the active site.

The protein belongs to the IlvD/Edd family. Homodimer. [2Fe-2S] cluster serves as cofactor. Mg(2+) is required as a cofactor.

It carries out the reaction (2R)-2,3-dihydroxy-3-methylbutanoate = 3-methyl-2-oxobutanoate + H2O. The catalysed reaction is (2R,3R)-2,3-dihydroxy-3-methylpentanoate = (S)-3-methyl-2-oxopentanoate + H2O. It participates in amino-acid biosynthesis; L-isoleucine biosynthesis; L-isoleucine from 2-oxobutanoate: step 3/4. The protein operates within amino-acid biosynthesis; L-valine biosynthesis; L-valine from pyruvate: step 3/4. Its function is as follows. Functions in the biosynthesis of branched-chain amino acids. Catalyzes the dehydration of (2R,3R)-2,3-dihydroxy-3-methylpentanoate (2,3-dihydroxy-3-methylvalerate) into 2-oxo-3-methylpentanoate (2-oxo-3-methylvalerate) and of (2R)-2,3-dihydroxy-3-methylbutanoate (2,3-dihydroxyisovalerate) into 2-oxo-3-methylbutanoate (2-oxoisovalerate), the penultimate precursor to L-isoleucine and L-valine, respectively. The sequence is that of Dihydroxy-acid dehydratase from Klebsiella pneumoniae (strain 342).